Consider the following 711-residue polypeptide: DNA ligase (711 aa).

Residues 1–21 (MNATHRGAQADASAPAGGLPP) are disordered. The segment covering 10–21 (ADASAPAGGLPP) has biased composition (low complexity). NAD(+) is bound by residues 52 to 56 (DAEYD), 101 to 102 (SL), and glutamate 146. The active-site N6-AMP-lysine intermediate is the lysine 148. NAD(+) contacts are provided by arginine 169, glutamate 205, lysine 322, and lysine 346. Zn(2+)-binding residues include cysteine 440, cysteine 443, cysteine 458, and cysteine 464. Residues 623–711 (RAPAPLAGKT…VGAGQPGEQS (89 aa)) enclose the BRCT domain.

The protein belongs to the NAD-dependent DNA ligase family. LigA subfamily. Requires Mg(2+) as cofactor. The cofactor is Mn(2+).

It catalyses the reaction NAD(+) + (deoxyribonucleotide)n-3'-hydroxyl + 5'-phospho-(deoxyribonucleotide)m = (deoxyribonucleotide)n+m + AMP + beta-nicotinamide D-nucleotide.. In terms of biological role, DNA ligase that catalyzes the formation of phosphodiester linkages between 5'-phosphoryl and 3'-hydroxyl groups in double-stranded DNA using NAD as a coenzyme and as the energy source for the reaction. It is essential for DNA replication and repair of damaged DNA. In Cupriavidus pinatubonensis (strain JMP 134 / LMG 1197) (Cupriavidus necator (strain JMP 134)), this protein is DNA ligase.